Consider the following 76-residue polypeptide: UPF0729 protein C18orf32 (76 aa).

Residues 1–37 (MVCIPCIVIPVLLWIYKKFLEPYIYPLVSPFVSRIWP) are necessary for its localzation to the endoplasmic reticulum and lipid droplets. The tract at residues 46–76 (DTNKGKVNFKGADMNGLPTKGPTEICDKKKD) is disordered.

This sequence belongs to the UPF0729 family. As to quaternary structure, interacts with DERL1 and AMFR. In terms of processing, undergoes ER-associated degradation (ERAD).

It localises to the endoplasmic reticulum. Its subcellular location is the lipid droplet. May activate the NF-kappa-B signaling pathway. The protein is UPF0729 protein C18orf32 (C18orf32) of Homo sapiens (Human).